The following is a 141-amino-acid chain: Large ribosomal subunit protein uL11 (141 aa).

Belongs to the universal ribosomal protein uL11 family. As to quaternary structure, part of the ribosomal stalk of the 50S ribosomal subunit. Interacts with L10 and the large rRNA to form the base of the stalk. L10 forms an elongated spine to which L12 dimers bind in a sequential fashion forming a multimeric L10(L12)X complex. One or more lysine residues are methylated.

In terms of biological role, forms part of the ribosomal stalk which helps the ribosome interact with GTP-bound translation factors. This chain is Large ribosomal subunit protein uL11, found in Chlamydia pneumoniae (Chlamydophila pneumoniae).